Consider the following 278-residue polypeptide: Large ribosomal subunit protein uL2c (278 aa).

The interval 222-241 is disordered; sequence GVVMNPNDHPHGGGEGRSPI.

The protein belongs to the universal ribosomal protein uL2 family. In terms of assembly, part of the 50S ribosomal subunit.

Its subcellular location is the plastid. The protein resides in the chloroplast. The sequence is that of Large ribosomal subunit protein uL2c (rpl2) from Tupiella akineta (Green alga).